The following is a 91-amino-acid chain: Large ribosomal subunit protein uL22 (91 aa).

Belongs to the universal ribosomal protein uL22 family. Part of the 50S ribosomal subunit.

In terms of biological role, this protein binds specifically to 23S rRNA; its binding is stimulated by other ribosomal proteins, e.g. L4, L17, and L20. It is important during the early stages of 50S assembly. It makes multiple contacts with different domains of the 23S rRNA in the assembled 50S subunit and ribosome. Its function is as follows. The globular domain of the protein is located near the polypeptide exit tunnel on the outside of the subunit, while an extended beta-hairpin is found that lines the wall of the exit tunnel in the center of the 70S ribosome. The protein is Large ribosomal subunit protein uL22 (rplV) of Ash yellows phytoplasma.